Here is a 288-residue protein sequence, read N- to C-terminus: Polyamine aminopropyltransferase (288 aa).

Residues 9–238 form the PABS domain; the sequence is ETLHDQFGQY…GIMTFAWATD (230 aa). Gln-33 is a binding site for S-methyl-5'-thioadenosine. Spermidine contacts are provided by His-64 and Asp-88. S-methyl-5'-thioadenosine contacts are provided by residues Glu-108 and 140-141; that span reads DG. Asp-158 (proton acceptor) is an active-site residue. Residue 158-161 coordinates spermidine; it reads DCTD. Pro-165 lines the S-methyl-5'-thioadenosine pocket.

Belongs to the spermidine/spermine synthase family. As to quaternary structure, homodimer or homotetramer.

The protein localises to the cytoplasm. The catalysed reaction is S-adenosyl 3-(methylsulfanyl)propylamine + putrescine = S-methyl-5'-thioadenosine + spermidine + H(+). Its pathway is amine and polyamine biosynthesis; spermidine biosynthesis; spermidine from putrescine: step 1/1. Functionally, catalyzes the irreversible transfer of a propylamine group from the amino donor S-adenosylmethioninamine (decarboxy-AdoMet) to putrescine (1,4-diaminobutane) to yield spermidine. This Escherichia coli (strain ATCC 8739 / DSM 1576 / NBRC 3972 / NCIMB 8545 / WDCM 00012 / Crooks) protein is Polyamine aminopropyltransferase.